A 113-amino-acid chain; its full sequence is MSTVGELACSYAVMILEDEGIAITSDKIATLVKAAGVEIESYWPMLFAKMAEKRNVTDLIMNVGAGGGGGGAPVSAAAPAAAGGAAAAAPAKEEKKDEPAEESDGDLGFGLFD.

A disordered region spans residues 87–113 (AAAPAKEEKKDEPAEESDGDLGFGLFD). A Phosphoserine modification is found at Ser-103.

The protein belongs to the eukaryotic ribosomal protein P1/P2 family. P1 and P2 exist as dimers at the large ribosomal subunit.

Plays an important role in the elongation step of protein synthesis. This chain is Large ribosomal subunit protein P1z (RPP1B), found in Arabidopsis thaliana (Mouse-ear cress).